Here is a 115-residue protein sequence, read N- to C-terminus: U3-lycotoxin-Ls1c (115 aa).

Positions 1-20 (MKFVLLFGVLLVTLFSYSSA) are cleaved as a signal peptide. Residues 21 to 44 (EMLDDFDQADEDELLSLIEKEEAR) constitute a propeptide that is removed on maturation. Cystine bridges form between Cys-48/Cys-63, Cys-55/Cys-72, Cys-62/Cys-87, and Cys-74/Cys-85.

The protein belongs to the neurotoxin 19 (CSTX) family. 01 subfamily. Expressed by the venom gland.

Its subcellular location is the secreted. The protein is U3-lycotoxin-Ls1c of Lycosa singoriensis (Wolf spider).